Reading from the N-terminus, the 245-residue chain is 2,3-bisphosphoglycerate-dependent phosphoglycerate mutase (245 aa).

Residues 8 to 15, 21 to 22, Arg-60, 87 to 90, Lys-98, 114 to 115, and 183 to 184 contribute to the substrate site; these read RHGQSLWN, TG, ERHY, RR, and GN. Catalysis depends on His-9, which acts as the Tele-phosphohistidine intermediate. Glu-87 acts as the Proton donor/acceptor in catalysis.

Belongs to the phosphoglycerate mutase family. BPG-dependent PGAM subfamily.

It carries out the reaction (2R)-2-phosphoglycerate = (2R)-3-phosphoglycerate. Its pathway is carbohydrate degradation; glycolysis; pyruvate from D-glyceraldehyde 3-phosphate: step 3/5. Functionally, catalyzes the interconversion of 2-phosphoglycerate and 3-phosphoglycerate. The chain is 2,3-bisphosphoglycerate-dependent phosphoglycerate mutase from Bacillus anthracis (strain A0248).